A 96-amino-acid polypeptide reads, in one-letter code: Protein RnfH (96 aa).

Belongs to the UPF0125 (RnfH) family.

In Klebsiella pneumoniae (strain 342), this protein is Protein RnfH.